Consider the following 134-residue polypeptide: Pre-histone-like nucleoprotein (134 aa).

Residues 2–23 (AILISPTNNTGWGLGTHKLFGG) constitute a propeptide that is removed on maturation. A disordered region spans residues 40–62 (RASWGSKGRRRRQGRARGAPLDP). Residues 125 to 134 (KRKRRVRFRQ) carry the Nuclear localization signal motif.

The protein belongs to the adenoviridae histone-like nucleoprotein family. In terms of assembly, interacts with the core-capsid bridging protein; this interaction bridges the virus core to the capsid. Interacts with host NPM1; this interaction might play a role in placing the pre-histone-like nucleoprotein on the viral DNA or regulating viral gene expression. Interacts with host HMGB1; this interaction inhibits host immune response. In terms of processing, cleaved near the N-terminus by the viral protease during virion maturation to form the mature protein.

Its subcellular location is the virion. The protein localises to the host nucleus. It localises to the host nucleolus. In terms of biological role, plays a role in the inhibition of host immune response within the nucleus. Interacts with cellular nucleosomes and immobilizes the host immune danger signal HMGB1 on chromatin. In turn, prevents HMGB1 release out of the cell and thus decreases inflammation. Also plays a role in the wrapping and condensation of the viral DNA. May also promote viral genome import into the nucleus. This chain is Pre-histone-like nucleoprotein, found in Canis lupus familiaris (Dog).